The primary structure comprises 353 residues: Photosystem II protein D1 (353 aa).

The residue at position 2 (threonine 2) is an N-acetylthreonine. Phosphothreonine is present on threonine 2. Helical transmembrane passes span 29-46 (YIGW…TATS), 118-133 (HFLL…EWEL), and 142-156 (WIAV…AATA). Histidine 118 is a binding site for chlorophyll a. Tyrosine 126 serves as a coordination point for pheophytin a. The [CaMn4O5] cluster site is built by aspartate 170 and glutamate 189. A helical transmembrane segment spans residues 197–218 (FHMLGVAGVFGGSLFSAMHGSL). Histidine 198 is a chlorophyll a binding site. A quinone contacts are provided by residues histidine 215 and 264 to 265 (SF). A Fe cation-binding site is contributed by histidine 215. Histidine 272 contacts Fe cation. A helical transmembrane segment spans residues 274 to 288 (FLAAWPVVGIWFTSL). [CaMn4O5] cluster contacts are provided by histidine 332, glutamate 333, aspartate 342, and alanine 344. Residues 345–353 (AIDAPSVNG) constitute a propeptide that is removed on maturation.

This sequence belongs to the reaction center PufL/M/PsbA/D family. PSII is composed of 1 copy each of membrane proteins PsbA, PsbB, PsbC, PsbD, PsbE, PsbF, PsbH, PsbI, PsbJ, PsbK, PsbL, PsbM, PsbT, PsbX, PsbY, PsbZ, Psb30/Ycf12, at least 3 peripheral proteins of the oxygen-evolving complex and a large number of cofactors. It forms dimeric complexes. The D1/D2 heterodimer binds P680, chlorophylls that are the primary electron donor of PSII, and subsequent electron acceptors. It shares a non-heme iron and each subunit binds pheophytin, quinone, additional chlorophylls, carotenoids and lipids. D1 provides most of the ligands for the Mn4-Ca-O5 cluster of the oxygen-evolving complex (OEC). There is also a Cl(-1) ion associated with D1 and D2, which is required for oxygen evolution. The PSII complex binds additional chlorophylls, carotenoids and specific lipids. serves as cofactor. Post-translationally, tyr-161 forms a radical intermediate that is referred to as redox-active TyrZ, YZ or Y-Z. In terms of processing, C-terminally processed by CTPA; processing is essential to allow assembly of the oxygen-evolving complex and thus photosynthetic growth.

It localises to the plastid. The protein localises to the chloroplast thylakoid membrane. The catalysed reaction is 2 a plastoquinone + 4 hnu + 2 H2O = 2 a plastoquinol + O2. Photosystem II (PSII) is a light-driven water:plastoquinone oxidoreductase that uses light energy to abstract electrons from H(2)O, generating O(2) and a proton gradient subsequently used for ATP formation. It consists of a core antenna complex that captures photons, and an electron transfer chain that converts photonic excitation into a charge separation. The D1/D2 (PsbA/PsbD) reaction center heterodimer binds P680, the primary electron donor of PSII as well as several subsequent electron acceptors. In Coffea arabica (Arabian coffee), this protein is Photosystem II protein D1.